The following is a 144-amino-acid chain: (R)-specific enoyl-CoA hydratase (144 aa).

The MaoC-like domain occupies 13 to 128 (DIKEGQSASL…TFRTTCTVAG (116 aa)).

Homotetramer.

It carries out the reaction a (3R)-3-hydroxyacyl-CoA = a (2E)-enoyl-CoA + H2O. Its function is as follows. Catalyzes the hydration of trans-2-enoyl-CoAs with a chain-length of 4-6 carbon atoms, forming the corresponding (3R)-3-hydroxyacyl-CoAs, which can then be utilized for the production of polyhydroxyalkanoates (PHA) polymers. Cannot use trans-2,3-octenoyl-CoA as substrate. The chain is (R)-specific enoyl-CoA hydratase from Rhodospirillum rubrum (strain ATCC 11170 / ATH 1.1.1 / DSM 467 / LMG 4362 / NCIMB 8255 / S1).